Here is an 868-residue protein sequence, read N- to C-terminus: Leucine--tRNA ligase (868 aa).

The 'HIGH' region signature appears at 42–52 (PYPSGKLHMGH). The short motif at 627–631 (KMSKS) is the 'KMSKS' region element. Lysine 630 contacts ATP.

It belongs to the class-I aminoacyl-tRNA synthetase family.

The protein resides in the cytoplasm. The catalysed reaction is tRNA(Leu) + L-leucine + ATP = L-leucyl-tRNA(Leu) + AMP + diphosphate. This is Leucine--tRNA ligase from Pseudomonas entomophila (strain L48).